Reading from the N-terminus, the 133-residue chain is UPF0102 protein ABSDF1354 (133 aa).

It belongs to the UPF0102 family.

In Acinetobacter baumannii (strain SDF), this protein is UPF0102 protein ABSDF1354.